A 219-amino-acid polypeptide reads, in one-letter code: Probable GTP-binding protein EngB (219 aa).

In terms of domain architecture, EngB-type G spans 24–207 (VQPEIAFAGR…HALIESWLRP (184 aa)). Residues 32-39 (GRSNAGKS), 59-63 (GRTQH), 81-84 (DLPG), 148-151 (TKCD), and 185-188 (LFSA) each bind GTP. Ser39 and Thr61 together coordinate Mg(2+).

Belongs to the TRAFAC class TrmE-Era-EngA-EngB-Septin-like GTPase superfamily. EngB GTPase family. It depends on Mg(2+) as a cofactor.

Necessary for normal cell division and for the maintenance of normal septation. The protein is Probable GTP-binding protein EngB of Burkholderia thailandensis (strain ATCC 700388 / DSM 13276 / CCUG 48851 / CIP 106301 / E264).